The primary structure comprises 515 residues: Spermatogenesis-associated protein 2 (515 aa).

A PUB domain is found at 78-150 (ALHCAFSMLE…VYKLKELVES (73 aa)). Residues 321–338 (TYFSTQDDVDLYTDSEPR) carry the PIM motif motif. A disordered region spans residues 429 to 452 (GHQTQGLDRLAPVHSKPKPSTTAT).

It belongs to the SPATA2 family. Interacts (via the PIM motif) with RNF31/HOIP (via the PUB domain); the interaction is direct. Interacts (via the PUB domain) with CYLD; the interaction is direct. Widely expressed, with highest expression in testis, lung and intestine, and lower expression in brain, heart and spleen. Present at high level in Sertoli cells: expressed from stage I to stage XII of the testis seminiferous epithelium (at protein level).

Its subcellular location is the cytoplasm. The protein resides in the nucleus. Functionally, bridging factor that mediates the recruitment of CYLD to the LUBAC complex, thereby regulating TNF-alpha-induced necroptosis. Acts as a direct binding intermediate that bridges RNF31/HOIP, the catalytic subunit of the LUBAC complex, and the deubiquitinase (CYLD), thereby recruiting CYLD to the TNF-R1 signaling complex (TNF-RSC). Required to activate the 'Met-1'- (linear) and 'Lys-63'-linked deubiquitinase activities of CYLD. Controls the kinase activity of RIPK1 and TNF-alpha-induced necroptosis by promoting 'Met-1'-linked deubiquitination of RIPK1 by CYLD. This chain is Spermatogenesis-associated protein 2, found in Mus musculus (Mouse).